Consider the following 125-residue polypeptide: Ribonuclease P protein component (125 aa).

It belongs to the RnpA family. In terms of assembly, consists of a catalytic RNA component (M1 or rnpB) and a protein subunit.

The catalysed reaction is Endonucleolytic cleavage of RNA, removing 5'-extranucleotides from tRNA precursor.. Functionally, RNaseP catalyzes the removal of the 5'-leader sequence from pre-tRNA to produce the mature 5'-terminus. It can also cleave other RNA substrates such as 4.5S RNA. The protein component plays an auxiliary but essential role in vivo by binding to the 5'-leader sequence and broadening the substrate specificity of the ribozyme. This Ruegeria pomeroyi (strain ATCC 700808 / DSM 15171 / DSS-3) (Silicibacter pomeroyi) protein is Ribonuclease P protein component.